We begin with the raw amino-acid sequence, 133 residues long: Ribosome-binding factor A (133 aa).

This sequence belongs to the RbfA family. As to quaternary structure, monomer. Binds 30S ribosomal subunits, but not 50S ribosomal subunits or 70S ribosomes.

The protein resides in the cytoplasm. In terms of biological role, one of several proteins that assist in the late maturation steps of the functional core of the 30S ribosomal subunit. Associates with free 30S ribosomal subunits (but not with 30S subunits that are part of 70S ribosomes or polysomes). Required for efficient processing of 16S rRNA. May interact with the 5'-terminal helix region of 16S rRNA. In Psychromonas ingrahamii (strain DSM 17664 / CCUG 51855 / 37), this protein is Ribosome-binding factor A.